Reading from the N-terminus, the 316-residue chain is Ester hydrolase C11orf54 homolog (316 aa).

Zn(2+) is bound by residues His-267, His-269, and His-279.

Monomer. The cofactor is Zn(2+).

The protein localises to the nucleus. It localises to the cytoplasm. Functionally, exhibits ester hydrolase activity on the substrate p-nitrophenyl acetate, in vitro. May regulate DNA damage and repair by regulating HIF1A degradation via chaperone-mediated autophagy (CMA). This is Ester hydrolase C11orf54 homolog from Xenopus laevis (African clawed frog).